We begin with the raw amino-acid sequence, 152 residues long: UPF0225 protein YchJ (152 aa).

It belongs to the UPF0225 family.

The chain is UPF0225 protein YchJ from Escherichia coli O7:K1 (strain IAI39 / ExPEC).